The primary structure comprises 85 residues: Sec-independent protein translocase protein TatA (85 aa).

Residues 1-21 form a helical membrane-spanning segment; the sequence is MAGLQGWQLVIIILLAILLFA. The interval 43-85 is disordered; it reads VKQMRTEGKDAKDERSGTGSTAADEPVEGRVVDRDETDPRDQR. Composition is skewed to basic and acidic residues over residues 44–58 and 69–85; these read KQMR…DERS and VEGR…RDQR.

The protein belongs to the TatA/E family. The Tat system comprises two distinct complexes: a TatABC complex, containing multiple copies of TatA, TatB and TatC subunits, and a separate TatA complex, containing only TatA subunits. Substrates initially bind to the TatABC complex, which probably triggers association of the separate TatA complex to form the active translocon.

The protein localises to the cell membrane. Its function is as follows. Part of the twin-arginine translocation (Tat) system that transports large folded proteins containing a characteristic twin-arginine motif in their signal peptide across membranes. TatA could form the protein-conducting channel of the Tat system. The protein is Sec-independent protein translocase protein TatA of Micrococcus luteus (strain ATCC 4698 / DSM 20030 / JCM 1464 / CCM 169 / CCUG 5858 / IAM 1056 / NBRC 3333 / NCIMB 9278 / NCTC 2665 / VKM Ac-2230) (Micrococcus lysodeikticus).